Reading from the N-terminus, the 801-residue chain is Phenylalanine--tRNA ligase beta subunit (801 aa).

Positions 39–154 (LKMPQKVVVG…GHLELGVELG (116 aa)) constitute a tRNA-binding domain. In terms of domain architecture, B5 spans 398-475 (IDEITIKTTF…RIYGIDNVSS (78 aa)). Mg(2+) contacts are provided by aspartate 453, aspartate 459, glutamate 462, and glutamate 463. Residues 708–800 (SKYQKSTRDL…LVREFDAVLR (93 aa)) enclose the FDX-ACB domain.

Belongs to the phenylalanyl-tRNA synthetase beta subunit family. Type 1 subfamily. Tetramer of two alpha and two beta subunits. The cofactor is Mg(2+).

It localises to the cytoplasm. The catalysed reaction is tRNA(Phe) + L-phenylalanine + ATP = L-phenylalanyl-tRNA(Phe) + AMP + diphosphate + H(+). The protein is Phenylalanine--tRNA ligase beta subunit of Helicobacter hepaticus (strain ATCC 51449 / 3B1).